The sequence spans 317 residues: Probable RuBisCO transcriptional regulator (317 aa).

The HTH lysR-type domain maps to 6-63 (FTLDQLRILKAIAKEGSFKKAANSLYVSQPAISLQIQNLERQLNVALFERGNKKATLT). Positions 23-42 (FKKAANSLYVSQPAISLQIQ) form a DNA-binding region, H-T-H motif.

Belongs to the LysR transcriptional regulatory family.

The protein localises to the plastid. It is found in the chloroplast. Functionally, trans-acting transcriptional regulator of RuBisCO genes (rbcL and rbcS) expression. This is Probable RuBisCO transcriptional regulator (rbcR) from Porphyra purpurea (Red seaweed).